A 187-amino-acid polypeptide reads, in one-letter code: Large ribosomal subunit protein eL18y (187 aa).

The tract at residues 151-187 (FGPAPGVPHSHSKPYVRAKGRKFEKARGKRKSRGFKV) is disordered. 2 stretches are compositionally biased toward basic residues: residues 160 to 170 (SHSKPYVRAKG) and 177 to 187 (RGKRKSRGFKV).

This sequence belongs to the eukaryotic ribosomal protein eL18 family. Interacts with NIK1. Interacts directly with EXA1. As to expression, ubiquitous.

The protein localises to the cytoplasm. This is Large ribosomal subunit protein eL18y (RPL18B) from Arabidopsis thaliana (Mouse-ear cress).